The chain runs to 126 residues: Methylglyoxal synthase (126 aa).

In terms of domain architecture, MGS-like spans 1 to 126 (MEKKIALIAH…LIKGLESLIF (126 aa)). Substrate-binding positions include His10, Lys14, 36-39 (TGTT), and 56-57 (SG). Residue Asp62 is the Proton donor/acceptor of the active site. His89 serves as a coordination point for substrate.

It belongs to the methylglyoxal synthase family.

The catalysed reaction is dihydroxyacetone phosphate = methylglyoxal + phosphate. In terms of biological role, catalyzes the formation of methylglyoxal from dihydroxyacetone phosphate. This Borreliella burgdorferi (strain ATCC 35210 / DSM 4680 / CIP 102532 / B31) (Borrelia burgdorferi) protein is Methylglyoxal synthase.